The primary structure comprises 583 residues: Nuclear hormone receptor family member nhr-31 (583 aa).

Positions 43-77 (DLRTSGATSSSGPATSYIIRPSDKQPTVSSGGSQN) are disordered. Over residues 46-58 (TSGATSSSGPATS) the composition is skewed to low complexity. Residues 66–77 (KQPTVSSGGSQN) show a composition bias toward polar residues. A DNA-binding region (nuclear receptor) is located at residues 79–154 (DSVCAVCGDG…AGMDPKAVRP (76 aa)). 2 consecutive NR C4-type zinc fingers follow at residues 82–102 (CAVC…CYGC) and 118–142 (CRFS…FQRC). The NR LBD domain maps to 195 to 464 (ETRILLMQLM…DNLLAEMFGD (270 aa)).

This sequence belongs to the nuclear hormone receptor family.

Its subcellular location is the nucleus. Functionally, orphan nuclear receptor. The chain is Nuclear hormone receptor family member nhr-31 (nhr-31) from Caenorhabditis elegans.